A 338-amino-acid chain; its full sequence is Clavatol oxidase claD (338 aa).

One can recognise a Fe2OG dioxygenase domain in the interval 193 to 299 (DPMSLLRLLH…RYSVVFFYDG (107 aa)). 3 residues coordinate Fe cation: H222, D224, and H280. Residue R290 participates in 2-oxoglutarate binding.

This sequence belongs to the iron/ascorbate-dependent oxidoreductase family. Fe(2+) serves as cofactor.

It catalyses the reaction clavatol + 2-oxoglutarate + O2 = hydroxyclavatol + succinate + CO2. It functions in the pathway secondary metabolite biosynthesis. Its function is as follows. 2-oxoglutarate-dependent dioxygenase; part of the cla gene cluster that produces clavatol and ortho-quinone methide. The clavatol biosynthesis cluster cla and the terrestric acid cluster tra are both involved in the production of peniphenones and penilactones. The non-reducing PKS claF is responsible for the formation of clavatol from successive condensations of 3 malonyl-CoA units, presumably with a simple acetyl-CoA starter unit, and 2 methylation steps. The esterase claE probably collaborates with claF by catalyzing the hydrolysis of ACP-bound acyl intermediates to free the ACP from stalled intermediates. The clavatol oxidase claD then converts clavatol to hydroxyclavatol. Spontaneous dehydration of hydroxyclavatol leads to the accumulation of the highly active ortho-quinone methide. On the other hand, the PKS-NRPS hybrid traA is involved in the formation of crustosic acid, with the help of traB and traD. The polyketide synthase module (PKS) of traA is responsible for the synthesis of the polyketide backbone via the condensation of an acetyl-CoA starter unit with 3 malonyl-CoA units. The downstream nonribosomal peptide synthetase (NRPS) module then amidates the carboxyl end of the polyketide with L-malic acid. Because traA lacks a designated enoylreductase (ER) domain, the required activity is provided the enoyl reductase traG. Crustosic acid undergoes decarboxylation and isomerization to the terrestric acid, catalyzed by the 2-oxoglutarate-dependent dioxygenase traH. Both acids are further converted to the 2 gamma-butyrolactones (R)-5-methyltetronic acid and (S)-5-carboxylmethyltetronic acid, with involvement of the cytochrome P450 monooxygenase claJ. Spontaneous addition of the methide to these gamma-butyrolactones leads to peniphenone D and penilactone D, which undergo again stereospecific attacking by methide to give penilactones A and B. This is Clavatol oxidase claD from Penicillium crustosum (Blue mold fungus).